The primary structure comprises 314 residues: Oxaloacetate tautomerase FAHD2A, mitochondrial (314 aa).

A mitochondrion-targeting transit peptide spans 1-84 (MLGSSGRRLL…ATLSVVRRAL (84 aa)). 3 residues coordinate Mg(2+): E159, E161, and D190.

The protein belongs to the FAH family. Mg(2+) serves as cofactor. Mn(2+) is required as a cofactor.

It is found in the mitochondrion. It carries out the reaction oxaloacetate = enol-oxaloacetate. Tautomerase that converts enol-oxaloacetate, a strong inhibitor of succinate dehydrogenase, to the physiological keto form of oxaloacetate. It is thereby required to maximize aerobic respiration efficiency by preventing succinate dehydrogenase inhibition. In Bos taurus (Bovine), this protein is Oxaloacetate tautomerase FAHD2A, mitochondrial.